A 170-amino-acid chain; its full sequence is MAQIRIHEVNTRIENEVEVSKFLQEEGVLYEKWNISKLPPHLNENYSLTDENKAEILAVFSKEIADVSARRGYKAHDVISLSNSTPNLDELLINFQKEHHHTDDEVRFIVSGHGIFAIEGKDGTFFDVELEPGDLISVPENARHYFTLQDDRQVVAIRIFVTTEGWVPIY.

Fe(2+) is bound by residues histidine 99, histidine 101, glutamate 105, and histidine 144. Ni(2+)-binding residues include histidine 99, histidine 101, glutamate 105, and histidine 144.

The protein belongs to the acireductone dioxygenase (ARD) family. Monomer. The cofactor is Fe(2+). It depends on Ni(2+) as a cofactor.

The enzyme catalyses 1,2-dihydroxy-5-(methylsulfanyl)pent-1-en-3-one + O2 = 3-(methylsulfanyl)propanoate + CO + formate + 2 H(+). It carries out the reaction 1,2-dihydroxy-5-(methylsulfanyl)pent-1-en-3-one + O2 = 4-methylsulfanyl-2-oxobutanoate + formate + 2 H(+). It functions in the pathway amino-acid biosynthesis; L-methionine biosynthesis via salvage pathway; L-methionine from S-methyl-5-thio-alpha-D-ribose 1-phosphate: step 5/6. In terms of biological role, catalyzes 2 different reactions between oxygen and the acireductone 1,2-dihydroxy-3-keto-5-methylthiopentene (DHK-MTPene) depending upon the metal bound in the active site. Fe-containing acireductone dioxygenase (Fe-ARD) produces formate and 2-keto-4-methylthiobutyrate (KMTB), the alpha-ketoacid precursor of methionine in the methionine recycle pathway. Ni-containing acireductone dioxygenase (Ni-ARD) produces methylthiopropionate, carbon monoxide and formate, and does not lie on the methionine recycle pathway. This Bacillus cereus (strain ZK / E33L) protein is Acireductone dioxygenase.